Reading from the N-terminus, the 271-residue chain is Eukaryotic translation initiation factor 3 subunit G (271 aa).

Disordered stretches follow at residues 1–29 (MPAL…SEVI) and 143–185 (KPTK…MRGR). An RRM domain is found at 189–267 (SAIRISNLSE…LILSVEWSKP (79 aa)).

The protein belongs to the eIF-3 subunit G family. Component of the eukaryotic translation initiation factor 3 (eIF-3) complex.

It localises to the cytoplasm. In terms of biological role, RNA-binding component of the eukaryotic translation initiation factor 3 (eIF-3) complex, which is involved in protein synthesis of a specialized repertoire of mRNAs and, together with other initiation factors, stimulates binding of mRNA and methionyl-tRNAi to the 40S ribosome. The eIF-3 complex specifically targets and initiates translation of a subset of mRNAs involved in cell proliferation. This subunit can bind 18S rRNA. The sequence is that of Eukaryotic translation initiation factor 3 subunit G from Anopheles gambiae (African malaria mosquito).